The primary structure comprises 293 residues: Elongation factor Ts (293 aa).

Positions 81–84 are involved in Mg(2+) ion dislocation from EF-Tu; that stretch reads TDFV.

This sequence belongs to the EF-Ts family.

It is found in the cytoplasm. Its function is as follows. Associates with the EF-Tu.GDP complex and induces the exchange of GDP to GTP. It remains bound to the aminoacyl-tRNA.EF-Tu.GTP complex up to the GTP hydrolysis stage on the ribosome. The protein is Elongation factor Ts of Thioalkalivibrio sulfidiphilus (strain HL-EbGR7).